Reading from the N-terminus, the 377-residue chain is Tyrosine-protein phosphatase 2 (377 aa).

In terms of domain architecture, Tyrosine-protein phosphatase spans 27–347; that stretch reads IDKEFNFILQ…RFCYLAISEA (321 aa). The segment at 77-137 is disordered; the sequence is IDDDDDDEDD…EDHGGSGDEG (61 aa). Over residues 78-91 the composition is skewed to acidic residues; that stretch reads DDDDDDEDDNEDDI. The span at 92-102 shows a compositional bias: low complexity; that stretch reads IVSNNNNNNNN. The span at 113–123 shows a compositional bias: polar residues; it reads GSSGQSDVMSN. Cys281 (phosphocysteine intermediate) is an active-site residue.

This sequence belongs to the protein-tyrosine phosphatase family. Non-receptor class subfamily.

It carries out the reaction O-phospho-L-tyrosyl-[protein] + H2O = L-tyrosyl-[protein] + phosphate. This chain is Tyrosine-protein phosphatase 2 (ptpB), found in Dictyostelium discoideum (Social amoeba).